Here is a 1527-residue protein sequence, read N- to C-terminus: ATP-binding cassette sub-family C member 3 (1527 aa).

Residues 1–32 (MDALCGSGELGSKFWDSNLSVHTENPDLTPCF) lie on the Extracellular side of the membrane. Asn18 carries N-linked (GlcNAc...) asparagine glycosylation. Residues 33 to 53 (QNSLLAWVPCIYLWVALPCYL) form a helical membrane-spanning segment. Residues 54 to 73 (LYLRHHCRGYIILSHLSKLK) are Cytoplasmic-facing. The helical transmembrane segment at 74-94 (MVLGVLLWCVSWADLFYSFHG) threads the bilayer. The Extracellular segment spans residues 95–99 (LVHGR). Residues 100-120 (APAPVFFVTPLVVGVTMLLAT) traverse the membrane as a helical segment. The Cytoplasmic segment spans residues 121–132 (LLIQYERLQGVQ). Residues 133 to 153 (SSGVLIIFWFLCVVCAIVPFR) form a helical membrane-spanning segment. Over 154–171 (SKILLAKAEGEISDPFRF) the chain is Extracellular. A helical membrane pass occupies residues 172–192 (TTFYIHFALVLSALILACFRE). Topologically, residues 193–302 (KPPFFSAKNV…RPRKPSFLKA (110 aa)) are cytoplasmic. Residues 303-323 (LLATFGSSFLISACFKLIQDL) form a helical membrane-spanning segment. The ABC transmembrane type-1 1 domain occupies 311–594 (FLISACFKLI…LPQLISNLTQ (284 aa)). At 324–349 (LSFINPQLLSILIRFISNPMAPSWWG) the chain is on the extracellular side. Residues 350–370 (FLVAGLMFLCSMMQSLILQHY) form a helical membrane-spanning segment. Topologically, residues 371–426 (YHYIFVTGVKFRTGIMGVIYRKALVITNSVKRASTVGEIVNLMSVDAQRFMDLAPF) are cytoplasmic. The chain crosses the membrane as a helical span at residues 427 to 447 (LNLLWSAPLQIILAIYFLWQN). At 448–450 (LGP) the chain is on the extracellular side. Residues 451-471 (SVLAGVAFMVLLIPLNGAVAV) traverse the membrane as a helical segment. Topologically, residues 472 to 533 (KMRAFQVKQM…LLRTAAYLHT (62 aa)) are cytoplasmic. Residues 534–554 (TTTFTWMCSPFLVTLITLWVY) form a helical membrane-spanning segment. The Extracellular segment spans residues 555 to 576 (VYVDPNNVLDAEKAFVSVSLFN). The chain crosses the membrane as a helical span at residues 577–597 (ILRLPLNMLPQLISNLTQASV). Residues 598 to 963 (SLKRIQQFLS…VELSVFWDYA (366 aa)) are Cytoplasmic-facing. Residues 629-851 (IHSGTFTWAQ…NGSFANFLCN (223 aa)) form the ABC transporter 1 domain. An ATP-binding site is contributed by 661–668 (GPVGCGKS). A phosphoserine mark is found at Ser908 and Ser911. A disordered region spans residues 910–932 (LSSDGEGQGRPVPRRHLGPSEKV). A helical transmembrane segment spans residues 964 to 984 (KAVGLCTTLAICLLYVGQSAA). The ABC transmembrane type-1 2 domain maps to 971 to 1252 (TLAICLLYVG…MIRMMSDLES (282 aa)). Over 985 to 1021 (AIGANVWLSAWTNDAMADSRQNNTSLRLGVYAALGIL) the chain is Extracellular. Residues Asn1006 and Asn1007 are each glycosylated (N-linked (GlcNAc...) asparagine). The helical transmembrane segment at 1022–1042 (QGFLVMLAAMAMAAGGIQAAR) threads the bilayer. Residues 1043–1085 (VLHQALLHNKIRSPQSFFDTTPSGRILNCFSKDIYVVDEVLAP) lie on the Cytoplasmic side of the membrane. Residues 1086-1106 (VILMLLNSFFNAISTLVVIMA) form a helical membrane-spanning segment. Ser1107 is a topological domain (extracellular). A helical membrane pass occupies residues 1108–1128 (TPLFTVVILPLAVLYTLVQRF). The Cytoplasmic portion of the chain corresponds to 1129–1199 (YAATSRQLKR…ISNRWLSIGV (71 aa)). A helical transmembrane segment spans residues 1200–1220 (EFVGNCVVLFAALFAVIGRSS). At 1221–1222 (LN) the chain is on the extracellular side. The chain crosses the membrane as a helical span at residues 1223-1243 (PGLVGLSVSYSLQVTFALNWM). Residues 1244 to 1527 (IRMMSDLESN…YGMARDAGLA (284 aa)) are Cytoplasmic-facing. Residues 1291–1523 (FRNYSVRYRP…RGIFYGMARD (233 aa)) enclose the ABC transporter 2 domain. Residue 1323 to 1330 (GRTGAGKS) participates in ATP binding.

This sequence belongs to the ABC transporter superfamily. ABCC family. Conjugate transporter (TC 3.A.1.208) subfamily. Mainly expressed in the liver. Also expressed in small intestine, colon, prostate, testis, brain and at a lower level in the kidney. In testis, localized to peritubular myoid cells, Leydig cells, along the basal membrane of Sertoli cells and moderately in the adluminal compartment of the seminiferous tubules.

Its subcellular location is the basolateral cell membrane. It localises to the basal cell membrane. The enzyme catalyses taurocholate(in) + ATP + H2O = taurocholate(out) + ADP + phosphate + H(+). It catalyses the reaction glycocholate(in) + ATP + H2O = glycocholate(out) + ADP + phosphate + H(+). The catalysed reaction is taurolithocholate 3-sulfate(in) + ATP + H2O = taurolithocholate 3-sulfate(out) + ADP + phosphate + H(+). It carries out the reaction taurochenodeoxycholate 3-sulfate(in) + ATP + H2O = taurochenodeoxycholate 3-sulfate(out) + ADP + phosphate + H(+). The enzyme catalyses an S-substituted glutathione(in) + ATP + H2O = an S-substituted glutathione(out) + ADP + phosphate + H(+). It catalyses the reaction ATP + H2O + xenobioticSide 1 = ADP + phosphate + xenobioticSide 2.. The catalysed reaction is 17beta-estradiol 17-O-(beta-D-glucuronate)(in) + ATP + H2O = 17beta-estradiol 17-O-(beta-D-glucuronate)(out) + ADP + phosphate + H(+). It carries out the reaction dehydroepiandrosterone 3-sulfate(in) + ATP + H2O = dehydroepiandrosterone 3-sulfate(out) + ADP + phosphate + H(+). The enzyme catalyses leukotriene C4(in) + ATP + H2O = leukotriene C4(out) + ADP + phosphate + H(+). It catalyses the reaction (4Z,15Z)-bilirubin IXalpha C8-beta-D-glucuronoside(in) + ATP + H2O = (4Z,15Z)-bilirubin IXalpha C8-beta-D-glucuronoside(out) + ADP + phosphate + H(+). The catalysed reaction is (4Z,15Z)-bilirubin IXalpha C8,C12-beta-D-bisglucuronoside(in) + ATP + H2O = (4Z,15Z)-bilirubin IXalpha C8,C12-beta-D-bisglucuronoside(out) + ADP + phosphate + H(+). Its function is as follows. ATP-dependent transporter of the ATP-binding cassette (ABC) family that binds and hydrolyzes ATP to enable active transport of various substrates including many drugs, toxicants and endogenous compound across cell membranes. Transports glucuronide conjugates such as bilirubin diglucuronide, estradiol-17-beta-o-glucuronide and GSH conjugates such as leukotriene C4 (LTC4). Transports also various bile salts (taurocholate, glycocholate, taurochenodeoxycholate-3-sulfate, taurolithocholate- 3-sulfate). Does not contribute substantially to bile salt physiology but provides an alternative route for the export of bile acids and glucuronides from cholestatic hepatocytes. May contribute to regulate the transport of organic compounds in testes across the blood-testis-barrier. Can confer resistance to various anticancer drugs, methotrexate, tenoposide and etoposide, by decreasing accumulation of these drugs in cells. The polypeptide is ATP-binding cassette sub-family C member 3 (Homo sapiens (Human)).